Here is a 159-residue protein sequence, read N- to C-terminus: Aspartate carbamoyltransferase regulatory chain (159 aa).

Zn(2+) is bound by residues C113, C118, C143, and C146.

Belongs to the PyrI family. In terms of assembly, contains catalytic and regulatory chains. Zn(2+) serves as cofactor.

Its function is as follows. Involved in allosteric regulation of aspartate carbamoyltransferase. The protein is Aspartate carbamoyltransferase regulatory chain of Methanococcoides burtonii (strain DSM 6242 / NBRC 107633 / OCM 468 / ACE-M).